Reading from the N-terminus, the 686-residue chain is Methionine--tRNA ligase (686 aa).

Positions 15-25 (PYANGSIHLGH) match the 'HIGH' region motif. Positions 146, 149, 159, and 162 each coordinate Zn(2+). Residues 332-336 (KMSKS) carry the 'KMSKS' region motif. Residue lysine 335 coordinates ATP. Residues 550–571 (AAAEAAAKEKAEAEKEQASQTE) are disordered. The tRNA-binding domain maps to 585-686 (AFSAVDMRIA…EGAQPGMRVM (102 aa)).

The protein belongs to the class-I aminoacyl-tRNA synthetase family. MetG type 1 subfamily. In terms of assembly, homodimer. Requires Zn(2+) as cofactor.

Its subcellular location is the cytoplasm. The enzyme catalyses tRNA(Met) + L-methionine + ATP = L-methionyl-tRNA(Met) + AMP + diphosphate. In terms of biological role, is required not only for elongation of protein synthesis but also for the initiation of all mRNA translation through initiator tRNA(fMet) aminoacylation. The protein is Methionine--tRNA ligase of Vibrio atlanticus (strain LGP32) (Vibrio splendidus (strain Mel32)).